We begin with the raw amino-acid sequence, 112 residues long: Protein NIM1-INTERACTING 3 (112 aa).

Disordered regions lie at residues 1–20 (MDRDRKRVKMEKEDDEEEKM) and 77–112 (EKAANESSSASNEYDGSKEKQEGSETNVCLDLNLSL). Coiled coils occupy residues 1 to 35 (MDRDRKRVKMEKEDDEEEKMEKLYTVLKNAREMRK) and 69 to 96 (NKAEANNIEKAANESSSASNEYDGSKEK). Low complexity predominate over residues 77-89 (EKAANESSSASNE).

It belongs to the NPR1-interactor family. In terms of assembly, interacts with NPR1 C-terminal region.

It localises to the nucleus. The polypeptide is Protein NIM1-INTERACTING 3 (Arabidopsis thaliana (Mouse-ear cress)).